Here is a 216-residue protein sequence, read N- to C-terminus: Protein fmp32, mitochondrial (216 aa).

Positions 111–133 (RQEMVALHSQVEQLFSDVERLKT) form a coiled coil. The chain crosses the membrane as a helical span at residues 193-215 (TLQWVFGIVTGSGALLLAYVRLI).

It belongs to the CCDC90 family.

The protein localises to the mitochondrion. Its subcellular location is the membrane. The protein is Protein fmp32, mitochondrial (fmp32) of Schizosaccharomyces pombe (strain 972 / ATCC 24843) (Fission yeast).